Consider the following 151-residue polypeptide: Large ribosomal subunit protein uL22 (151 aa).

This sequence belongs to the universal ribosomal protein uL22 family. In terms of assembly, part of the 50S ribosomal subunit.

In terms of biological role, this protein binds specifically to 23S rRNA. It makes multiple contacts with different domains of the 23S rRNA in the assembled 50S subunit and ribosome. Its function is as follows. The globular domain of the protein is located near the polypeptide exit tunnel on the outside of the subunit, while an extended beta-hairpin is found that lines the wall of the exit tunnel in the center of the 70S ribosome. This Thermofilum pendens (strain DSM 2475 / Hrk 5) protein is Large ribosomal subunit protein uL22.